Consider the following 351-residue polypeptide: MNPPKSAPDAQGLSYRDAGVDIDAGDALVDKIKPFAKKTLRDGVLGGIGGFGALFEVPKKYKEPVLVSGTDGVGTKLKLAFHLNKHDTVGQDLVAMSVNDILVQGAEPLFFLDYFACGKLDVDTAATVVKGIAQGCELSGCALIGGETAEMPGMYPDGEYDLAGFAVGAVEKSKIIDGSTIAEGDVVLGLASSGIHSNGFSLVRKIIERANPDLSADFHGRSLADALMAPTRIYVKPLLALMQKIAVKGMAHITGGGLVENIPRVLREGLTAELDQKAWPLPPLFKWLQEHGGVADAEMHRVFNCGIGMAVIVSAADADAAVSDLTAAGEQVWKIGTVRASREGEAQTVVV.

Belongs to the AIR synthase family.

It is found in the cytoplasm. It carries out the reaction 2-formamido-N(1)-(5-O-phospho-beta-D-ribosyl)acetamidine + ATP = 5-amino-1-(5-phospho-beta-D-ribosyl)imidazole + ADP + phosphate + H(+). It functions in the pathway purine metabolism; IMP biosynthesis via de novo pathway; 5-amino-1-(5-phospho-D-ribosyl)imidazole from N(2)-formyl-N(1)-(5-phospho-D-ribosyl)glycinamide: step 2/2. The chain is Phosphoribosylformylglycinamidine cyclo-ligase from Burkholderia multivorans (strain ATCC 17616 / 249).